The primary structure comprises 358 residues: Phospho-N-acetylmuramoyl-pentapeptide-transferase (358 aa).

Transmembrane regions (helical) follow at residues 13–35 (LLIL…IFIG), 81–101 (MGGV…NINL), 106–126 (LFLL…DDFL), 142–162 (FFLQ…KDLI), 171–191 (SWQI…LVGI), 201–221 (LDGL…TEIL), 228–248 (LIIF…FLKY), 268–290 (ILGS…GIFI), and 336–356 (IVEN…VLKI).

The protein belongs to the glycosyltransferase 4 family. MraY subfamily. The cofactor is Mg(2+).

Its subcellular location is the cell inner membrane. The enzyme catalyses UDP-N-acetyl-alpha-D-muramoyl-L-alanyl-gamma-D-glutamyl-meso-2,6-diaminopimeloyl-D-alanyl-D-alanine + di-trans,octa-cis-undecaprenyl phosphate = di-trans,octa-cis-undecaprenyl diphospho-N-acetyl-alpha-D-muramoyl-L-alanyl-D-glutamyl-meso-2,6-diaminopimeloyl-D-alanyl-D-alanine + UMP. It participates in cell wall biogenesis; peptidoglycan biosynthesis. In terms of biological role, catalyzes the initial step of the lipid cycle reactions in the biosynthesis of the cell wall peptidoglycan: transfers peptidoglycan precursor phospho-MurNAc-pentapeptide from UDP-MurNAc-pentapeptide onto the lipid carrier undecaprenyl phosphate, yielding undecaprenyl-pyrophosphoryl-MurNAc-pentapeptide, known as lipid I. In Prochlorococcus marinus (strain MIT 9312), this protein is Phospho-N-acetylmuramoyl-pentapeptide-transferase.